Consider the following 79-residue polypeptide: Conotoxin ba-2281 (79 aa).

An N-terminal signal peptide occupies residues 1–24 (MNRMGFFLMLTAAVLLTSLVCTEA). The propeptide occupies 25-52 (TPADESKVKRARWSRIEGSRLFRHRLPK). 3 disulfides stabilise this stretch: Cys-58/Cys-66, Cys-61/Cys-71, and Cys-65/Cys-76. 4-hydroxyproline occurs at positions 59, 67, 68, and 73.

Expressed by the venom duct.

It localises to the secreted. This is Conotoxin ba-2281 from Conus bayani (Bayan's cone).